Consider the following 155-residue polypeptide: Small ribosomal subunit protein uS7 (155 aa).

Belongs to the universal ribosomal protein uS7 family. Part of the 30S ribosomal subunit. Contacts proteins S9 and S11.

One of the primary rRNA binding proteins, it binds directly to 16S rRNA where it nucleates assembly of the head domain of the 30S subunit. Is located at the subunit interface close to the decoding center, probably blocks exit of the E-site tRNA. The chain is Small ribosomal subunit protein uS7 from Chlorobium luteolum (strain DSM 273 / BCRC 81028 / 2530) (Pelodictyon luteolum).